A 76-amino-acid chain; its full sequence is MSARQIYYSDKYFDEDFEYRHVMLPKDIAKMVPKNHLMSEAEWRSIGVQQSHGWIHYMKHEPEPHILLFRRKVTGQ.

It belongs to the CKS family. Forms a homohexamer that can probably bind six kinase subunits.

Its function is as follows. Binds to the catalytic subunit of the cyclin dependent kinases and is essential for their biological function. The polypeptide is Cyclin-dependent kinases regulatory subunit (Patella vulgata (Common limpet)).